Here is a 374-residue protein sequence, read N- to C-terminus: Deoxyguanosinetriphosphate triphosphohydrolase-like protein (374 aa).

The 132-residue stretch at Arg-65 to Asn-196 folds into the HD domain.

It belongs to the dGTPase family. Type 2 subfamily.

This Nitrosomonas europaea (strain ATCC 19718 / CIP 103999 / KCTC 2705 / NBRC 14298) protein is Deoxyguanosinetriphosphate triphosphohydrolase-like protein (dgt).